The chain runs to 510 residues: Indoleacetate--CoA ligase (510 aa).

This sequence belongs to the ATP-dependent AMP-binding enzyme family. Monomer.

It carries out the reaction (indol-3-yl)acetate + ATP + CoA = (indol-3-yl)acetyl-CoA + AMP + diphosphate. It catalyses the reaction (indol-3-yl)acetate + ATP + H(+) = (indol-3-yl)acetyl-AMP + diphosphate. The catalysed reaction is (indol-3-yl)acetyl-AMP + CoA = (indol-3-yl)acetyl-CoA + AMP + H(+). Its activity is regulated as follows. Inhibited by high concentrations of substrates, and by the synthetic auxin compound 2,4-dichlorophenoxyacetate (2,4-D), which does not serve as substrate. Functionally, involved in degradation of indoleacetate, the most common member of the auxin class of plant hormones. Highly specific indoleacetate-CoA ligase which catalyzes the ATP-dependent activation of indoleacetate (IAA) to indoleacetyl-CoA. Also activates some closely related compounds such as the non-physiological compound (2-naphthyl)acetate and phenylacetate, which seems to be a fortuitous substrate for IaaB. In Aromatoleum aromaticum (strain DSM 19018 / LMG 30748 / EbN1) (Azoarcus sp. (strain EbN1)), this protein is Indoleacetate--CoA ligase.